Consider the following 29-residue polypeptide: Cytochrome b6-f complex subunit 8 (29 aa).

Residues 3 to 23 (IISIGWVSLMVVFTFSISLVV) form a helical membrane-spanning segment.

This sequence belongs to the PetN family. The 4 large subunits of the cytochrome b6-f complex are cytochrome b6, subunit IV (17 kDa polypeptide, PetD), cytochrome f and the Rieske protein, while the 4 small subunits are PetG, PetL, PetM and PetN. The complex functions as a dimer.

Its subcellular location is the plastid. The protein resides in the chloroplast thylakoid membrane. Component of the cytochrome b6-f complex, which mediates electron transfer between photosystem II (PSII) and photosystem I (PSI), cyclic electron flow around PSI, and state transitions. This is Cytochrome b6-f complex subunit 8 from Staurastrum punctulatum (Green alga).